The chain runs to 132 residues: Keratin, high-sulfur matrix protein, IIIA3 (132 aa).

In terms of biological role, the keratin products of mammalian epidermal derivatives such as wool and hair consist of microfibrils embedded in a rigid matrix of other proteins. The matrix proteins include the high-sulfur and high-tyrosine keratins, having molecular weights of 6-20 kDa, whereas the microfibrils contain the larger, low-sulfur keratins (40-56 kDa). This is Keratin, high-sulfur matrix protein, IIIA3 from Capra hircus (Goat).